The following is a 405-amino-acid chain: Splicing factor 45 (405 aa).

S2 carries the post-translational modification N-acetylserine. S2 is subject to Phosphoserine. K15 is covalently cross-linked (Glycyl lysine isopeptide (Lys-Gly) (interchain with G-Cter in SUMO2)). An N6-acetyllysine modification is found at K21. Residues K24 and K33 each participate in a glycyl lysine isopeptide (Lys-Gly) (interchain with G-Cter in SUMO2) cross-link. K41 is subject to N6-acetyllysine; alternate. K41 participates in a covalent cross-link: Glycyl lysine isopeptide (Lys-Gly) (interchain with G-Cter in SUMO2); alternate. The segment covering 57–68 (LKRGGSSDDRQI) has biased composition (basic and acidic residues). Disordered regions lie at residues 57-88 (LKRG…SGFS) and 114-233 (RQRE…FLAN). Residue K58 forms a Glycyl lysine isopeptide (Lys-Gly) (interchain with G-Cter in SUMO2) linkage. The residue at position 71 (T71) is a Phosphothreonine. Over residues 114 to 153 (RQREERQRQRELERQKEIEEREKRRKDRHEASGFSRRPDP) the composition is skewed to basic and acidic residues. Phosphoserine is present on residues S155 and S169. Residues 182 to 200 (VEKDKELPRDFPYEEDSRP) show a composition bias toward basic and acidic residues. Residue S222 is modified to Phosphoserine. Residues 235–283 (GGTVAHKIMQKYGFREGQGLGKHEQGLSTALSVEKTSKRGGKIIVGDAT) form the G-patch domain. Position 237 is a phosphothreonine (T237). A Glycyl lysine isopeptide (Lys-Gly) (interchain with G-Cter in SUMO2) cross-link involves residue K256. S266 carries the post-translational modification Phosphoserine. K276 participates in a covalent cross-link: Glycyl lysine isopeptide (Lys-Gly) (interchain with G-Cter in SUMO2). Phosphoserine occurs at positions 295 and 297. The RRM domain maps to 310–389 (VVLLRNMVGA…YFGGRVVKAC (80 aa)).

Binds SXL. Associates with the spliceosome. Interacts with SF3B1, SF1 and U2AF2.

The protein resides in the nucleus. Splice factor that binds to the single-stranded 3'AG at the exon/intron border and promotes its utilization in the second catalytic step. Involved in the regulation of alternative splicing and the utilization of cryptic splice sites. This Mus musculus (Mouse) protein is Splicing factor 45 (Rbm17).